Here is a 640-residue protein sequence, read N- to C-terminus: NAIFVPRPERKRREVMQIANTTMSSRSRNTTVLDTYNITDPEELETEYPFFESRVDNKERTVISNLRPFTLYRIDIHSCNHEAEKLGCSASNFVFARTMPAEGADDIPGPVTWEPRPENSIFLKWPEPENPNGLILMYEIKYGSQVEDQRECVSRQEYRKYGGAKLNRLNPGNYTARIQATSLSGNGSWTDPVFFYVQAKTTYENFIHLMIALPIAVLLIVGGLVIMLYVFHRKRNSSRLGNGVLYASVNPEYFSAADVYVPDEWEVAREKITMSRELGQGSFGMVYEGVAKGVVKDEPETRVAIKTVNEAASMRERIEFLNEASVMKEFNCHHVVRLLGVVSQGQPTLVIMELMTRGDLKSYLRSLRPEMENNPVLAPPSLSKMIQMAGEIADGMAYLNANKFVHRDLAARNCMVAEDFTVKIGDFGMTRDIYETDYYRKGGKGLLPVRWMSPESLKDGVFTTHSDVWSFGVVLWEIATLAEQPYQGLSNEQVLRFVMEGGLLDKPDNCPDMLFELMRMCWQYNPKMRPSFLEIISSVKDEMEAGFREVSFYYSEENKPPEPEELDLEPENMESVPLDPSASSASLPLPDRHSGHKAENGPGPGVLVLRASFDERQPYAHMNGGRKNERALPLPQSSTC.

2 Fibronectin type-III domains span residues 5 to 101 and 107 to 200; these read VPRP…TMPA and IPGP…VQAK. The Extracellular segment spans residues 14–208; sequence EVMQIANTTM…AKTTYENFIH (195 aa). N-linked (GlcNAc...) asparagine glycosylation is found at asparagine 20, asparagine 29, asparagine 37, asparagine 173, and asparagine 186. The helical transmembrane segment at 209–232 threads the bilayer; it reads LMIALPIAVLLIVGGLVIMLYVFH. Over 233-640 the chain is Cytoplasmic; it reads RKRNSSRLGN…ALPLPQSSTC (408 aa). The short motif at 250–253 is the IRS1- and SHC1-binding element; the sequence is NPEY. Tyrosine 253 bears the Phosphotyrosine mark. Residues 272-547 enclose the Protein kinase domain; the sequence is ITMSRELGQG…SVKDEMEAGF (276 aa). ATP-binding positions include 278–286 and lysine 306; that span reads LGQGSFGMV. The Proton acceptor role is filled by aspartate 408. 3 positions are modified to phosphotyrosine; by autocatalysis: tyrosine 434, tyrosine 438, and tyrosine 439. Glycyl lysine isopeptide (Lys-Gly) (interchain with G-Cter in ubiquitin) cross-links involve residues lysine 441 and lysine 444. Phosphoserine; by GSK3-beta is present on serine 551. Residue serine 555 is modified to Phosphoserine. The disordered stretch occupies residues 555–640; it reads SEENKPPEPE…ALPLPQSSTC (86 aa). Positions 563 to 572 are enriched in acidic residues; it reads PEELDLEPEN. The segment covering 573-589 has biased composition (low complexity); it reads MESVPLDPSASSASLPL. Basic and acidic residues predominate over residues 590–599; sequence PDRHSGHKAE.

It belongs to the protein kinase superfamily. Tyr protein kinase family. Insulin receptor subfamily. In terms of assembly, tetramer of 2 alpha and 2 beta chains linked by disulfide bonds. The alpha chains contribute to the formation of the ligand-binding domain, while the beta chain carries the kinase domain. Interacts with PIK3R1 and with the PTB/PID domains of IRS1 and SHC1 in vitro when autophosphorylated on tyrosine residues. Forms a hybrid receptor with INSR, the hybrid is a tetramer consisting of 1 alpha chain and 1 beta chain of INSR and 1 alpha chain and 1 beta chain of IGF1R. Interacts with ARRB1 and ARRB2. Interacts with GRB10. Interacts with RACK1. Interacts with SOCS1, SOCS2 and SOCS3. Interacts with 14-3-3 proteins. Interacts with NMD2. Interacts with MAP3K5. Interacts with STAT3. Interacts (nascent precursor form) with ZFAND2B. Post-translationally, autophosphorylated on tyrosine residues in response to ligand binding. Autophosphorylation occurs in trans, i.e. one subunit of the dimeric receptor phosphorylates tyrosine residues on the other subunit. Autophosphorylation occurs in a sequential manner; Tyr-438 is predominantly phosphorylated first, followed by phosphorylation of Tyr-434 and Tyr-439. While every single phosphorylation increases kinase activity, all three tyrosine residues in the kinase activation loop (Tyr-438, Tyr-434 and Tyr-439) have to be phosphorylated for optimal activity. Can be autophosphorylated at additional tyrosine residues (in vitro). Autophosphorylated is followed by phosphorylation of juxtamembrane tyrosines and C-terminal serines. May also be phosphorylated at Tyr-434 and Tyr-439 by mTORC2. Phosphorylation of Tyr-253 is required for IRS1- and SHC1-binding. Phosphorylation of Ser-551 by GSK-3beta restrains kinase activity and promotes cell surface expression, it requires a priming phosphorylation at Ser-555. Dephosphorylated by PTPN1. Polyubiquitinated at Lys-441 and Lys-444 through both 'Lys-48' and 'Lys-29' linkages, promoting receptor endocytosis and subsequent degradation by the proteasome. Ubiquitination is facilitated by pre-existing phosphorylation. In terms of processing, sumoylated with SUMO1. Post-translationally, controlled by regulated intramembrane proteolysis (RIP). Undergoes metalloprotease-dependent constitutive ectodomain shedding to produce a membrane-anchored 52 kDa C-Terminal fragment which is further processed by presenilin gamma-secretase to yield an intracellular 50 kDa fragment.

The protein resides in the cell membrane. The catalysed reaction is L-tyrosyl-[protein] + ATP = O-phospho-L-tyrosyl-[protein] + ADP + H(+). With respect to regulation, activated by autophosphorylation at Tyr-434, Tyr-438 and Tyr-439 on the kinase activation loop; phosphorylation at all three tyrosine residues is required for optimal kinase activity. Inhibited by MSC1609119A-1, BMS-754807, PQIP, benzimidazole pyridinone, isoquinolinedione, bis-azaindole, 3-cyanoquinoline, 2,4-bis-arylamino-1,3-pyrimidine, pyrrolopyrimidine, pyrrole-5-carboxaldehyde, picropodophyllin (PPP), tyrphostin derivatives. While most inhibitors bind to the ATP binding pocket, MSC1609119A-1 functions as allosteric inhibitor and binds close to the DFG motif and the activation loop. In terms of biological role, receptor tyrosine kinase which mediates actions of insulin-like growth factor 1 (IGF1). Binds IGF1 with high affinity and IGF2 and insulin (INS) with a lower affinity. The activated IGF1R is involved in cell growth and survival control. IGF1R is crucial for tumor transformation and survival of malignant cell. Ligand binding activates the receptor kinase, leading to receptor autophosphorylation, and tyrosines phosphorylation of multiple substrates, that function as signaling adapter proteins including, the insulin-receptor substrates (IRS1/2), Shc and 14-3-3 proteins. Phosphorylation of IRSs proteins lead to the activation of two main signaling pathways: the PI3K-AKT/PKB pathway and the Ras-MAPK pathway. The result of activating the MAPK pathway is increased cellular proliferation, whereas activating the PI3K pathway inhibits apoptosis and stimulates protein synthesis. Phosphorylated IRS1 can activate the 85 kDa regulatory subunit of PI3K (PIK3R1), leading to activation of several downstream substrates, including protein AKT/PKB. AKT phosphorylation, in turn, enhances protein synthesis through mTOR activation and triggers the antiapoptotic effects of IGFIR through phosphorylation and inactivation of BAD. In parallel to PI3K-driven signaling, recruitment of Grb2/SOS by phosphorylated IRS1 or Shc leads to recruitment of Ras and activation of the ras-MAPK pathway. In addition to these two main signaling pathways IGF1R signals also through the Janus kinase/signal transducer and activator of transcription pathway (JAK/STAT). Phosphorylation of JAK proteins can lead to phosphorylation/activation of signal transducers and activators of transcription (STAT) proteins. In particular activation of STAT3, may be essential for the transforming activity of IGF1R. The JAK/STAT pathway activates gene transcription and may be responsible for the transforming activity. JNK kinases can also be activated by the IGF1R. IGF1 exerts inhibiting activities on JNK activation via phosphorylation and inhibition of MAP3K5/ASK1, which is able to directly associate with the IGF1R. When present in a hybrid receptor with INSR, binds IGF1. The chain is Insulin-like growth factor 1 receptor (IGF1R) from Bos taurus (Bovine).